Here is a 197-residue protein sequence, read N- to C-terminus: MIASIRGILIAVAADHVVVETGGIGWMIYAPRPVIAALGDIGATVRLFTYLLVREDSLTLYGFETVEQRQLFETLLSVTGVGPQAALNLLSSGTTDELRLAIATGDVTRLARTPRIGKKLAERLVLELKGKINVKGLPTGAAVTPAVAAANAELSEALISLGFTDAEAAAAIAALPSDAPPDLEERVRLALRYFSAS.

The tract at residues 1–64 (MIASIRGILI…EDSLTLYGFE (64 aa)) is domain I. The interval 65–145 (TVEQRQLFET…GLPTGAAVTP (81 aa)) is domain II. The segment at 146–148 (AVA) is flexible linker. The segment at 148–197 (AAANAELSEALISLGFTDAEAAAAIAALPSDAPPDLEERVRLALRYFSAS) is domain III.

The protein belongs to the RuvA family. In terms of assembly, homotetramer. Forms an RuvA(8)-RuvB(12)-Holliday junction (HJ) complex. HJ DNA is sandwiched between 2 RuvA tetramers; dsDNA enters through RuvA and exits via RuvB. An RuvB hexamer assembles on each DNA strand where it exits the tetramer. Each RuvB hexamer is contacted by two RuvA subunits (via domain III) on 2 adjacent RuvB subunits; this complex drives branch migration. In the full resolvosome a probable DNA-RuvA(4)-RuvB(12)-RuvC(2) complex forms which resolves the HJ.

It localises to the cytoplasm. In terms of biological role, the RuvA-RuvB-RuvC complex processes Holliday junction (HJ) DNA during genetic recombination and DNA repair, while the RuvA-RuvB complex plays an important role in the rescue of blocked DNA replication forks via replication fork reversal (RFR). RuvA specifically binds to HJ cruciform DNA, conferring on it an open structure. The RuvB hexamer acts as an ATP-dependent pump, pulling dsDNA into and through the RuvAB complex. HJ branch migration allows RuvC to scan DNA until it finds its consensus sequence, where it cleaves and resolves the cruciform DNA. This Roseiflexus sp. (strain RS-1) protein is Holliday junction branch migration complex subunit RuvA.